The chain runs to 357 residues: Dihydroflavonol 4-reductase (357 aa).

The NADP(+) site is built by Lys49 and Tyr168.

This sequence belongs to the NAD(P)-dependent epimerase/dehydratase family. Dihydroflavonol-4-reductase subfamily.

The catalysed reaction is a (2R,3S,4S)-leucoanthocyanidin + NADP(+) = a (2R,3R)-dihydroflavonol + NADPH + H(+). It carries out the reaction (2S)-flavan-4-ol + NADP(+) = (2S)-flavanone + NADPH + H(+). It participates in pigment biosynthesis; anthocyanin biosynthesis. Its function is as follows. Bifunctional enzyme involved in flavonoid metabolism. The chain is Dihydroflavonol 4-reductase (A1) from Zea mays (Maize).